The primary structure comprises 461 residues: MRTEWIKKRMNDKTRTQMYYAKKGIITEEMEYVAKEENLDPELVRSEVARGRLIIPANINHKHLKPMAIGRVSKTKVNSNIGASALASDIEEEVRKLETSVKYGADTVMDLSAGAKNMDEIREAIIAASPVPIGTVPMYQIIDEIGDVLELTYDDILRVLEKQAKQGVSYFTIHAGLLLRHMPEIAKRKMGIVSRGGSLTASWMLKHHKENPFYTIFDDILDICKEYDVSLSLGDSLRPGCLYDASDKAQLEELKVLGELTLRAWDKDVQVMIEGPGHVPINEIERNVRLEQIYCHEAPFYVLGPLVLDIGAGYDHIGSAIGAAMAAWYGVSMLCYVTPKEHLGLPNEEDVREGMLAYKIAAHSADIARKIPGARDKDDEMSDARYKFDWKKQFELALDPERAKEYHDETLPQEVFKEAEFCSMCGPKFCSYKVTQDAMENFDWDEFKKEAEEKMKAEANN.

Substrate-binding positions include Asn-80, Met-109, Tyr-139, His-174, 194–196 (SRG), 235–238 (DSLR), and Glu-274. Position 278 (His-278) interacts with Zn(2+). Residue Tyr-301 participates in substrate binding. His-342 is a Zn(2+) binding site. 3 residues coordinate [4Fe-4S] cluster: Cys-422, Cys-425, and Cys-430.

This sequence belongs to the ThiC family. In terms of assembly, homodimer. Requires [4Fe-4S] cluster as cofactor.

The catalysed reaction is 5-amino-1-(5-phospho-beta-D-ribosyl)imidazole + S-adenosyl-L-methionine = 4-amino-2-methyl-5-(phosphooxymethyl)pyrimidine + CO + 5'-deoxyadenosine + formate + L-methionine + 3 H(+). It participates in cofactor biosynthesis; thiamine diphosphate biosynthesis. Its function is as follows. Catalyzes the synthesis of the hydroxymethylpyrimidine phosphate (HMP-P) moiety of thiamine from aminoimidazole ribotide (AIR) in a radical S-adenosyl-L-methionine (SAM)-dependent reaction. This chain is Phosphomethylpyrimidine synthase, found in Nautilia profundicola (strain ATCC BAA-1463 / DSM 18972 / AmH).